An 84-amino-acid chain; its full sequence is Acetylcholine receptor subunit alpha (84 aa).

C7 and C21 form a disulfide bridge. N20 and N66 each carry an N-linked (GlcNAc...) asparagine glycan. Residues C71 and C72 are joined by a disulfide bond.

The protein belongs to the ligand-gated ion channel (TC 1.A.9) family. Acetylcholine receptor (TC 1.A.9.1) subfamily. Alpha-1/CHRNA1 sub-subfamily. As to quaternary structure, one of the alpha chains that assemble within the acetylcholine receptor, a pentamer of two alpha chains, a beta, a delta, and a gamma (in immature muscle) or epsilon (in mature muscle) chains. The muscle heteropentamer composed of alpha-1, beta-1, delta, epsilon subunits interacts with the alpha-conotoxin ImII.

The protein resides in the postsynaptic cell membrane. It is found in the cell membrane. The catalysed reaction is K(+)(in) = K(+)(out). It catalyses the reaction Na(+)(in) = Na(+)(out). In terms of biological role, upon acetylcholine binding, the AChR responds by an extensive change in conformation that affects all subunits and leads to opening of an ion-conducting channel across the plasma membrane. This is Acetylcholine receptor subunit alpha (CHRNA1) from Herpestes ichneumon (Egyptian mongoose).